A 184-amino-acid chain; its full sequence is Large ribosomal subunit protein uL22A (184 aa).

Lys-46 participates in a covalent cross-link: Glycyl lysine isopeptide (Lys-Gly) (interchain with G-Cter in ubiquitin). Thr-70 carries the phosphothreonine modification.

This sequence belongs to the universal ribosomal protein uL22 family. As to quaternary structure, component of the large ribosomal subunit (LSU). Mature yeast ribosomes consist of a small (40S) and a large (60S) subunit. The 40S small subunit contains 1 molecule of ribosomal RNA (18S rRNA) and 33 different proteins (encoded by 57 genes). The large 60S subunit contains 3 rRNA molecules (25S, 5.8S and 5S rRNA) and 46 different proteins (encoded by 81 genes). uL22 is associated with the polypeptide exit tunnel.

It localises to the cytoplasm. Its function is as follows. Component of the ribosome, a large ribonucleoprotein complex responsible for the synthesis of proteins in the cell. The small ribosomal subunit (SSU) binds messenger RNAs (mRNAs) and translates the encoded message by selecting cognate aminoacyl-transfer RNA (tRNA) molecules. The large subunit (LSU) contains the ribosomal catalytic site termed the peptidyl transferase center (PTC), which catalyzes the formation of peptide bonds, thereby polymerizing the amino acids delivered by tRNAs into a polypeptide chain. The nascent polypeptides leave the ribosome through a tunnel in the LSU and interact with protein factors that function in enzymatic processing, targeting, and the membrane insertion of nascent chains at the exit of the ribosomal tunnel. This Saccharomyces cerevisiae (strain ATCC 204508 / S288c) (Baker's yeast) protein is Large ribosomal subunit protein uL22A.